The sequence spans 81 residues: PKYTIVDKETCIACGACGAAAPDIYDYDEDGIAYVTLDDNQGIVEVPDILIDDMMDAFEGCPTDSIKVADEPFDGDPNKFE.

The 4Fe-4S ferredoxin-type domain maps to 2-30; it reads KYTIVDKETCIACGACGAAAPDIYDYDED. [4Fe-4S] cluster-binding residues include Cys11, Cys14, Cys17, and Cys61.

[4Fe-4S] cluster serves as cofactor.

Its function is as follows. Ferredoxins are iron-sulfur proteins that transfer electrons in a wide variety of metabolic reactions. This Bacillus thermoproteolyticus protein is Ferredoxin.